A 439-amino-acid chain; its full sequence is 3-phosphoshikimate 1-carboxyvinyltransferase (439 aa).

Positions 21, 22, and 26 each coordinate 3-phosphoshikimate. Lys-21 contributes to the phosphoenolpyruvate binding site. The phosphoenolpyruvate site is built by Gly-94 and Arg-122. 3-phosphoshikimate is bound by residues Ser-167, Gln-169, Asp-320, and Lys-347. Gln-169 contacts phosphoenolpyruvate. The active-site Proton acceptor is the Asp-320. Phosphoenolpyruvate contacts are provided by Arg-351 and Arg-395.

Belongs to the EPSP synthase family. In terms of assembly, monomer.

Its subcellular location is the cytoplasm. It carries out the reaction 3-phosphoshikimate + phosphoenolpyruvate = 5-O-(1-carboxyvinyl)-3-phosphoshikimate + phosphate. The protein operates within metabolic intermediate biosynthesis; chorismate biosynthesis; chorismate from D-erythrose 4-phosphate and phosphoenolpyruvate: step 6/7. Catalyzes the transfer of the enolpyruvyl moiety of phosphoenolpyruvate (PEP) to the 5-hydroxyl of shikimate-3-phosphate (S3P) to produce enolpyruvyl shikimate-3-phosphate and inorganic phosphate. The chain is 3-phosphoshikimate 1-carboxyvinyltransferase from Hyphomonas neptunium (strain ATCC 15444).